The chain runs to 474 residues: 6-phospho-beta-galactosidase (474 aa).

The D-galactose 6-phosphate site is built by glutamine 19, histidine 116, asparagine 159, glutamate 160, and asparagine 297. Glutamate 160 serves as the catalytic Proton donor. Glutamate 375 serves as the catalytic Nucleophile. The D-galactose 6-phosphate site is built by serine 433, tryptophan 434, lysine 440, and tyrosine 442.

This sequence belongs to the glycosyl hydrolase 1 family.

It carries out the reaction a 6-phospho-beta-D-galactoside + H2O = D-galactose 6-phosphate + an alcohol. The protein operates within carbohydrate metabolism; lactose degradation; D-galactose 6-phosphate and beta-D-glucose from lactose 6-phosphate: step 1/1. The protein is 6-phospho-beta-galactosidase of Lacticaseibacillus casei (strain BL23) (Lactobacillus casei).